A 1178-amino-acid polypeptide reads, in one-letter code: DNA-directed RNA polymerase subunit beta' (1178 aa).

Zn(2+)-binding residues include C60, C62, C75, and C78. 3 residues coordinate Mg(2+): D450, D452, and D454. Residues C795, C869, C876, and C879 each coordinate Zn(2+).

Belongs to the RNA polymerase beta' chain family. As to quaternary structure, the RNAP catalytic core consists of 2 alpha, 1 beta, 1 beta' and 1 omega subunit. When a sigma factor is associated with the core the holoenzyme is formed, which can initiate transcription. The cofactor is Mg(2+). Zn(2+) serves as cofactor.

The catalysed reaction is RNA(n) + a ribonucleoside 5'-triphosphate = RNA(n+1) + diphosphate. In terms of biological role, DNA-dependent RNA polymerase catalyzes the transcription of DNA into RNA using the four ribonucleoside triphosphates as substrates. In Clostridium botulinum (strain Okra / Type B1), this protein is DNA-directed RNA polymerase subunit beta'.